Reading from the N-terminus, the 918-residue chain is MPCAMLVAAAVEVAVPTLAEAAALGAIGAILAGPLMQPTKVRSPVRVRNSNLKCHGTKMRSPSMVSMSQSQRIKIPSYVGLSTVHTPALLTPVISSRSTRTFQKTAKTIQERSHAVMQIPEFTPGTGLRSTNAIQRTTEVLQRHSHVGLRQPHAGRLREMHTASGRPVIGLTPTIVSQKTTKVPKQPRFVARAIDNFSREVMNAIAVAHDEAQYIAHLTIGSTNILLSLISQYICIFLLEIILNKAYKMFRAAVRRATRGAKLATLMEYGTNLTKLAEEGKLDPVVGRQKQIDHVVQILSRRTKNNPCLIGEPGVGKTAIAEGLAQLIATGDVPETIQQKTVISLDMGLLLAGTKYRGELEERLKNILEEIKQNGEIILFLDEVHTLVTAGSAEGAIDAANIFKPALARGELQCIGATTINEYRKHIEKDAALERRFQPVKIPESTVDETVGILKGLRERYQGHHKVQYTDEALVAAAELSHKHIRDRFLPDKAIDLMDEAGSIVRLRNAQCKPSKKVNDLEAELKKTLKEKNDAISIQNFRRAKQLRDHELQLRTNISALTDKKTQMMEPDAIAMPVVTEDDVRHAISRWTGVPLHKVSMDESRKLLKLEEALHRRVVGQGEAVAAVSRAIRRARLGLKHPGRPVASLVFAGPTGVGKSELAKALAAYYYGSSESEEAAMVRLDMSEYMEKHAVARLVGSPPGYVWHGEGGQLTEAVRRRPHAVVLLDEVEKAHRDVFDLLLQVLDDGRLTDGKGRTVDFKNTLIVMTTNIGSSLIVNNGGDGAAAAGRIKNTVTDEMKRHFRPEFLNRLDEVIMFQPLTELEVGKIAGIMLEEFAGRVREKGIKLKVTDKFRELVVEEGFDPSYGARPLRRAVVRLLEDTLAEKMLAGEVREGDSVIVDADSAGNAVVRRSNAMPA.

Residues 266–515 (LMEYGTNLTK…RLRNAQCKPS (250 aa)) are i. ATP-binding positions include 311–318 (GEPGVGKT) and 653–660 (GPTGVGKS). An II region spans residues 579 to 774 (VTEDDVRHAI…LIVMTTNIGS (196 aa)).

This sequence belongs to the ClpA/ClpB family. ClpC subfamily.

The protein localises to the plastid. It is found in the chloroplast. In terms of biological role, molecular chaperone that may interact with a ClpP-like protease involved in degradation of denatured proteins in the chloroplast. The sequence is that of Chaperone protein ClpC4, chloroplastic (CPLC4) from Oryza sativa subsp. japonica (Rice).